The primary structure comprises 350 residues: Ion-translocating oxidoreductase complex subunit D (350 aa).

5 helical membrane passes run 20-40 (VMVL…YFFG), 44-64 (LIQI…ILKI), 68-88 (PVLN…LAIS), 89-109 (IPPL…IIFV), and 125-145 (MAGY…WLPV). Threonine 187 bears the FMN phosphoryl threonine mark. 5 consecutive transmembrane segments (helical) span residues 215-235 (SWQQ…ILLF), 241-261 (WHIP…AFAY), 267-287 (APPL…FILS), 300-320 (ILYA…GGYP), and 322-342 (AVAF…YYTQ).

Belongs to the NqrB/RnfD family. In terms of assembly, the complex is composed of six subunits: RnfA, RnfB, RnfC, RnfD, RnfE and RnfG. FMN is required as a cofactor.

The protein resides in the cell inner membrane. Part of a membrane-bound complex that couples electron transfer with translocation of ions across the membrane. The polypeptide is Ion-translocating oxidoreductase complex subunit D (Psychromonas ingrahamii (strain DSM 17664 / CCUG 51855 / 37)).